Consider the following 254-residue polypeptide: uncharacterized protein (254 aa).

Residue C71 is the Acyl-thioester intermediate of the active site. Active-site residues include H110 and D125.

This sequence belongs to the arylamine N-acetyltransferase family.

This is an uncharacterized protein from Bacillus subtilis (strain 168).